We begin with the raw amino-acid sequence, 335 residues long: 2-acylglycerol O-acyltransferase 1 (335 aa).

Transmembrane regions (helical) follow at residues 24–44 and 104–124; these read WVLS…MLVL and YIFG…NFCT. N-linked (GlcNAc...) asparagine glycosylation is present at Asn-180.

Belongs to the diacylglycerol acyltransferase family. As to expression, expressed at high level in kidney and stomach. Expressed at lower level in brown and white adipose tissue, uterus and liver. Not detected in small intestine.

It localises to the endoplasmic reticulum membrane. The catalysed reaction is a 2-acylglycerol + an acyl-CoA = a 1,2-diacylglycerol + CoA. The enzyme catalyses 2-(9Z-octadecenoyl)-glycerol + butanoyl-CoA = 1-butanoyl-2-(9Z-octadecenoyl)-glycerol + CoA. It catalyses the reaction 2-(9Z-octadecenoyl)-glycerol + octanoyl-CoA = 1-octanoyl-2-(9Z-octadecenoyl)-glycerol + CoA. It carries out the reaction 2-(9Z-octadecenoyl)-glycerol + dodecanoyl-CoA = 1-dodecanoyl-2-(9Z-octadecenoyl)-glycerol + CoA. The catalysed reaction is 2-(9Z-octadecenoyl)-glycerol + tetradecanoyl-CoA = 1-tetradecanoyl-2-(9Z-octadecenoyl)-glycerol + CoA. The enzyme catalyses 2-(9Z-octadecenoyl)-glycerol + hexadecanoyl-CoA = 1-hexadecanoyl-2-(9Z-octadecenoyl)-glycerol + CoA. It catalyses the reaction 2-(9Z-octadecenoyl)-glycerol + octadecanoyl-CoA = 1-octadecanoyl-2-(9Z-octadecenoyl)-glycerol + CoA. It carries out the reaction eicosanoyl-CoA + 2-(9Z-octadecenoyl)-glycerol = 1-eicosanoyl-2-(9Z-octadecenoyl)-glycerol + CoA. The catalysed reaction is 2-(9Z-octadecenoyl)-glycerol + (9Z)-octadecenoyl-CoA = 1,2-di-(9Z-octadecenoyl)-glycerol + CoA. The enzyme catalyses 2-(9Z-octadecenoyl)-glycerol + (9Z,12Z)-octadecadienoyl-CoA = 1-(9Z,12Z-octadecadienoyl)-2-(9Z-octadecenoyl)-glycerol + CoA. It catalyses the reaction 2-(9Z-octadecenoyl)-glycerol + (5Z,8Z,11Z,14Z)-eicosatetraenoyl-CoA = 1-(5Z,8Z,11Z,14Z-eicosatetraenoyl)-2-(9Z-octadecenoyl)-glycerol + CoA. It carries out the reaction a 2-acylglycerol + an acyl-CoA = a 1,2-diacyl-sn-glycerol + CoA. The catalysed reaction is a 2-acylglycerol + an acyl-CoA = a 2,3-diacyl-sn-glycerol + CoA. The enzyme catalyses a 1-acylglycerol + an acyl-CoA = a 1,2-diacylglycerol + CoA. It catalyses the reaction 1-dodecanoylglycerol + (9Z)-octadecenoyl-CoA = 1-dodecanoyl-2-(9Z-octadecenoyl)-glycerol + CoA. It carries out the reaction 1-tetradecanoylglycerol + (9Z)-octadecenoyl-CoA = 1-tetradecanoyl-2-(9Z-octadecenoyl)-glycerol + CoA. The catalysed reaction is 1-hexadecanoylglycerol + (9Z)-octadecenoyl-CoA = 1-hexadecanoyl-2-(9Z-octadecenoyl)-glycerol + CoA. The enzyme catalyses 1-(9Z-octadecenoyl)-glycerol + (9Z)-octadecenoyl-CoA = 1,2-di-(9Z-octadecenoyl)-glycerol + CoA. It catalyses the reaction 1-(9Z,12Z-octadecadienoyl)-glycerol + (9Z)-octadecenoyl-CoA = 1-(9Z,12Z-octadecadienoyl)-2-(9Z-octadecenoyl)-glycerol + CoA. It carries out the reaction 1-(9Z,12Z,15Z-octadecatrienoyl)-glycerol + (9Z)-octadecenoyl-CoA = 1-(9Z,12Z,15Z-octadecatrienoyl)-2-(9Z-octadecenoyl)-glycerol + CoA. The catalysed reaction is 1-(5Z,8Z,11Z,14Z-eicosatetraenoyl)-glycerol + (9Z)-octadecenoyl-CoA = 1-(5Z,8Z,11Z,14Z-eicosatetraenoyl)-2-(9Z-octadecenoyl)-glycerol + CoA. The enzyme catalyses a 1-acylglycerol + an acyl-CoA = a 1,3-diacylglycerol + CoA. It catalyses the reaction 1-dodecanoylglycerol + (9Z)-octadecenoyl-CoA = 1-dodecanoyl-3-(9Z-octadecenoyl)-glycerol + CoA. It carries out the reaction 1-hexadecanoylglycerol + (9Z)-octadecenoyl-CoA = 1-(9Z-octadecenoyl)-3-hexadecanoylglycerol + CoA. The catalysed reaction is 1-octadecanoylglycerol + (9Z)-octadecenoyl-CoA = 1-octadecanoyl-3-(9Z-octadecenoyl)-glycerol + CoA. The enzyme catalyses 1-(9Z-octadecenoyl)-sn-glycerol + (9Z)-octadecenoyl-CoA = 1,3-di-(9Z-octadecenoyl)-glycerol + CoA. It catalyses the reaction 1-(9Z,12Z-octadecadienoyl)-glycerol + (9Z)-octadecenoyl-CoA = 1-(9Z-octadecenoyl)-3-(9Z,12Z-octadecadienoyl)-glycerol + CoA. It carries out the reaction 1-(9Z,12Z,15Z-octadecatrienoyl)-glycerol + (9Z)-octadecenoyl-CoA = 1-(9Z,12Z,15Z-octadecatrienoyl)-3-(9Z-octadecenoyl)-glycerol + CoA. The catalysed reaction is a 1-acyl-sn-glycerol + an acyl-CoA = a 1,3-diacyl-sn-glycerol + CoA. The enzyme catalyses a 3-acyl-sn-glycerol + an acyl-CoA = a 1,3-diacyl-sn-glycerol + CoA. It catalyses the reaction 3-octadecanoyl-sn-glycerol + (9Z)-octadecenoyl-CoA = 1-(9Z-octadecenoyl)-3-octadecanoyl-sn-glycerol + CoA. It functions in the pathway glycerolipid metabolism; triacylglycerol biosynthesis. Involved in glycerolipid synthesis and lipid metabolism. Catalyzes the formation of diacylglycerol, the precursor of triacylglycerol, by transferring the acyl chain of a fatty acyl-CoA to a monoacylglycerol, mainly at the sn-1 or sn-3 positions. It uses both sn-2-monoacylglycerol (2-acylglycerol) and sn-1-monoacylglycerol (1-acyl-sn-glycerol) equally well as substrates, and uses sn-3-monoacylglycerol (3-acyl-sn-glycerol) with lower efficiency. Probably not involved in absorption of dietary fat in the small intestine. The chain is 2-acylglycerol O-acyltransferase 1 from Mus musculus (Mouse).